The primary structure comprises 203 residues: Large ribosomal subunit protein bL25 (203 aa).

Belongs to the bacterial ribosomal protein bL25 family. CTC subfamily. In terms of assembly, part of the 50S ribosomal subunit; part of the 5S rRNA/L5/L18/L25 subcomplex. Contacts the 5S rRNA. Binds to the 5S rRNA independently of L5 and L18.

Functionally, this is one of the proteins that binds to the 5S RNA in the ribosome where it forms part of the central protuberance. This is Large ribosomal subunit protein bL25 from Dechloromonas aromatica (strain RCB).